The sequence spans 196 residues: Lipoprotein signal peptidase (196 aa).

3 helical membrane-spanning segments follow: residues 43 to 63 (LMLK…GISF), 75 to 95 (AIFL…MICS), and 97 to 117 (TIGS…NLID). Active-site residues include D126 and D144. Residues 135 to 155 (YSFPVFNLADCFITLGVIILI) form a helical membrane-spanning segment.

The protein belongs to the peptidase A8 family.

The protein localises to the cell inner membrane. It catalyses the reaction Release of signal peptides from bacterial membrane prolipoproteins. Hydrolyzes -Xaa-Yaa-Zaa-|-(S,diacylglyceryl)Cys-, in which Xaa is hydrophobic (preferably Leu), and Yaa (Ala or Ser) and Zaa (Gly or Ala) have small, neutral side chains.. The protein operates within protein modification; lipoprotein biosynthesis (signal peptide cleavage). This protein specifically catalyzes the removal of signal peptides from prolipoproteins. This chain is Lipoprotein signal peptidase, found in Rickettsia typhi (strain ATCC VR-144 / Wilmington).